Here is a 387-residue protein sequence, read N- to C-terminus: MATRASTSSRVSPAFTFLVIFFLLSLTASVEAAGRGVNNDKKGGGLGASFIFGDSLVDAGNNNYLSTLSRANMKPNGIDFKASGGTPTGRFTNGRTIGDIVGEELGSANYAIPFLAPDAKGKALLAGVNYASGGGGIMNATGRIFVNRLGMDVQVDFFNTTRKQFDDLLGKEKAKDYIAKKSIFSITIGANDFLNNYLFPLLSVGTRFTQTPDDFIGDMLEHLRDQLTRLYQLDARKFVIGNVGPIGCIPYQKTINQLDENECVDLANKLANQYNVRLKSLLEELNKKLPGAMFVHANVYDLVMELITNYDKYGFKSATKACCGNGGQYAGIIPCGPTSSLCEERDKYVFWDPYHPSEAANVIIAKQLLYGDVKVISPVNLSKLRDM.

Residues 1–32 (MATRASTSSRVSPAFTFLVIFFLLSLTASVEA) form the signal peptide. The Nucleophile role is filled by serine 55. N-linked (GlcNAc...) asparagine glycosylation is found at asparagine 139 and asparagine 159. Active-site residues include aspartate 352 and histidine 355. A glycan (N-linked (GlcNAc...) asparagine) is linked at asparagine 380.

It belongs to the 'GDSL' lipolytic enzyme family.

The protein resides in the secreted. The chain is GDSL esterase/lipase At2g23540 from Arabidopsis thaliana (Mouse-ear cress).